Reading from the N-terminus, the 424-residue chain is UDP-N-acetylglucosamine 1-carboxyvinyltransferase (424 aa).

Position 22–23 (22–23) interacts with phosphoenolpyruvate; the sequence is KN. A UDP-N-acetyl-alpha-D-glucosamine-binding site is contributed by Arg98. Residue Cys122 is the Proton donor of the active site. Cys122 bears the 2-(S-cysteinyl)pyruvic acid O-phosphothioketal mark. UDP-N-acetyl-alpha-D-glucosamine-binding positions include 127–131, Asp312, and Ile334; that span reads RPVDQ.

Belongs to the EPSP synthase family. MurA subfamily.

The protein localises to the cytoplasm. It catalyses the reaction phosphoenolpyruvate + UDP-N-acetyl-alpha-D-glucosamine = UDP-N-acetyl-3-O-(1-carboxyvinyl)-alpha-D-glucosamine + phosphate. It participates in cell wall biogenesis; peptidoglycan biosynthesis. Functionally, cell wall formation. Adds enolpyruvyl to UDP-N-acetylglucosamine. The chain is UDP-N-acetylglucosamine 1-carboxyvinyltransferase from Xanthomonas oryzae pv. oryzae (strain MAFF 311018).